The sequence spans 318 residues: Melanoma-associated antigen 8 (318 aa).

Residues 1-103 are disordered; the sequence is MLLGQKSQRY…GPSTSPDPAH (103 aa). Residues 112–311 form the MAGE domain; it reads LDEKVAELVR…ISYPSLHEEA (200 aa).

As to expression, expressed in many tumors of several types, such as melanoma, head and neck squamous cell carcinoma, lung carcinoma and breast carcinoma, but not in normal tissues except for testis and placenta.

Not known, though may play a role in embryonal development and tumor transformation or aspects of tumor progression. This chain is Melanoma-associated antigen 8 (MAGEA8), found in Homo sapiens (Human).